An 82-amino-acid polypeptide reads, in one-letter code: Small ribosomal subunit protein bS18 (82 aa).

The segment at 1-25 (MADTSSSQARRPFHRRRKTCPFSGA) is disordered.

It belongs to the bacterial ribosomal protein bS18 family. In terms of assembly, part of the 30S ribosomal subunit. Forms a tight heterodimer with protein bS6.

Its function is as follows. Binds as a heterodimer with protein bS6 to the central domain of the 16S rRNA, where it helps stabilize the platform of the 30S subunit. The chain is Small ribosomal subunit protein bS18 from Agrobacterium fabrum (strain C58 / ATCC 33970) (Agrobacterium tumefaciens (strain C58)).